The primary structure comprises 179 residues: Cytoglobin-2 (179 aa).

Residues 18–167 form the Globin domain; that stretch reads PLSDAEMEII…VYWHVTGAYT (150 aa). Residues His-81 and His-113 each coordinate heme b.

It belongs to the globin family. In terms of assembly, monomeric.

It localises to the cytoplasm. It is found in the nucleus. It catalyses the reaction Fe(II)-heme b-[protein] + nitric oxide + O2 = Fe(III)-heme b-[protein] + nitrate. It carries out the reaction Fe(III)-heme b-[protein] + nitric oxide + H2O = Fe(II)-heme b-[protein] + nitrite + 2 H(+). The enzyme catalyses 2 superoxide + 2 H(+) = H2O2 + O2. The catalysed reaction is H2O2 + AH2 = A + 2 H2O. Its function is as follows. Probable multifunctional globin with a hexacoordinated heme iron required for the catalysis of various reactions depending on redox condition of the cell as well as oxygen availability. Has a nitric oxide dioxygenase (NOD) activity and is most probably involved in cell-mediated and oxygen-dependent nitric oxide consumption. Under normoxic conditions functions as a nitric oxide dioxygenase (NOD) but under hypoxic conditions the globin may switch its function to that of a nitrite (NO2) reductase (NiR), generating nitric oxide. Could also have peroxidase and superoxide dismutase activities, detoxifying reactive oxygen species and protecting cells against oxidative stress. Also binds dioxygen with low affinity and could function as an oxygen sensor but has probably no function as a respiratory oxygen carrier. This Oryzias latipes (Japanese rice fish) protein is Cytoglobin-2.